Here is a 151-residue protein sequence, read N- to C-terminus: uncharacterized protein (151 aa).

The segment at 123-151 is disordered; sequence PAGQNAGTGPAQKLKTDETRCYERRGGSQ. Residues 136–151 show a composition bias toward basic and acidic residues; the sequence is LKTDETRCYERRGGSQ.

This is an uncharacterized protein from Triticum aestivum (Wheat).